Consider the following 264-residue polypeptide: Transmembrane protein 270 (264 aa).

The next 3 membrane-spanning stretches (helical) occupy residues 31-51, 74-94, and 133-153; these read HLYR…LGLA, LSLA…LLLW, and LFLS…LLTW. Residues 227-236 show a composition bias toward polar residues; sequence AQEVKSQETS. Positions 227 to 264 are disordered; the sequence is AQEVKSQETSGPPPQFLIPESSTTESGPLPPQPETPGE. Positions 254 to 264 are enriched in pro residues; it reads PLPPQPETPGE.

Testis.

The protein resides in the membrane. The sequence is that of Transmembrane protein 270 from Mus musculus (Mouse).